Reading from the N-terminus, the 209-residue chain is Urease accessory protein UreE (209 aa).

Over residues 170–196 (EHHGHSHSHSHDHDHDHDHDHDHDHQH) the composition is skewed to basic and acidic residues. Residues 170–209 (EHHGHSHSHSHDHDHDHDHDHDHDHQHGPSCSHGHHHGHR) form a disordered region.

This sequence belongs to the UreE family.

The protein resides in the cytoplasm. Involved in urease metallocenter assembly. Binds nickel. Probably functions as a nickel donor during metallocenter assembly. This chain is Urease accessory protein UreE, found in Burkholderia mallei (strain NCTC 10247).